The sequence spans 957 residues: ADAMTS-like protein 2 (957 aa).

An N-terminal signal peptide occupies residues 1–29 (MDGRRQHPHWAWSLLAVAVVAGGAAPTEA). One can recognise a TSP type-1 1 domain in the interval 47 to 106 (AYWWGEWTKWTACSRSCGGGVTSQERHCLQQRRKSVPGTGNRTCVGTSKRYQLCRVQECP). Disulfide bonds link C59–C100, C63–C105, and C74–C90. 8 N-linked (GlcNAc...) asparagine glycosylation sites follow: N87, N374, N435, N482, N518, N530, N539, and N550. Residues 532 to 544 (SSEAPFPNTSASP) show a composition bias toward polar residues. A disordered region spans residues 532-568 (SSEAPFPNTSASPPNLAGNRTHKARTRPKARKQGVSP). Over residues 551–563 (RTHKARTRPKARK) the composition is skewed to basic residues. 6 TSP type-1 domains span residues 570–624 (DMYR…EFCA), 628–692 (CQPR…PACG), 694–742 (QWEM…TGPP), 743–801 (CDRQ…KNCP), 803–857 (HWLA…TCFE), and 859–914 (PCFK…QPCP). N737 carries an N-linked (GlcNAc...) asparagine glycan. N-linked (GlcNAc...) asparagine glycosylation occurs at N813. The region spanning 918–956 (PDDSCQDQPGTNCALAIKVNLCGHWYYSKACCRSCRPPH) is the PLAC domain.

In terms of assembly, interacts with LTBP1. In terms of processing, glycosylated. Can be O-fucosylated by POFUT2 on a serine or a threonine residue found within the consensus sequence C1-X(2)-(S/T)-C2-G of the TSP type-1 repeat domains where C1 and C2 are the first and second cysteine residue of the repeat, respectively. Fucosylated repeats can then be further glycosylated by the addition of a beta-1,3-glucose residue by the glucosyltransferase, B3GALTL. Fucosylation mediates the efficient secretion of ADAMTS family members. Can also be C-glycosylated with one or two mannose molecules on tryptophan residues within the consensus sequence W-X-X-W of the TPRs, and N-glycosylated. These other glycosylations can also facilitate secretion.

Its subcellular location is the secreted. This is ADAMTS-like protein 2 (Adamtsl2) from Mus musculus (Mouse).